A 489-amino-acid chain; its full sequence is UDP-N-acetylmuramate--L-alanine ligase (489 aa).

Position 128–134 (128–134 (GTHGKTT)) interacts with ATP.

Belongs to the MurCDEF family.

The protein resides in the cytoplasm. The catalysed reaction is UDP-N-acetyl-alpha-D-muramate + L-alanine + ATP = UDP-N-acetyl-alpha-D-muramoyl-L-alanine + ADP + phosphate + H(+). It participates in cell wall biogenesis; peptidoglycan biosynthesis. Its function is as follows. Cell wall formation. This is UDP-N-acetylmuramate--L-alanine ligase from Shewanella woodyi (strain ATCC 51908 / MS32).